Consider the following 209-residue polypeptide: Uridine kinase (209 aa).

12–19 (GGSGGGKT) lines the ATP pocket.

It belongs to the uridine kinase family.

Its subcellular location is the cytoplasm. The catalysed reaction is uridine + ATP = UMP + ADP + H(+). It carries out the reaction cytidine + ATP = CMP + ADP + H(+). The protein operates within pyrimidine metabolism; CTP biosynthesis via salvage pathway; CTP from cytidine: step 1/3. It functions in the pathway pyrimidine metabolism; UMP biosynthesis via salvage pathway; UMP from uridine: step 1/1. The chain is Uridine kinase from Streptococcus agalactiae serotype V (strain ATCC BAA-611 / 2603 V/R).